Here is a 510-residue protein sequence, read N- to C-terminus: MRAETQTIKMTEASSPTPVLEMRGISQIFPGVKALDGVDIALYPGKVTALIGENGAGKSTLVKILTGIYRPNEGEILLDGKAVHFHSAQDAIDAGVTAIHQETVLFDELSVGENIFLGHAPKGRFGLIDWKTINERARILLEQLESTIDPTIRLKDLSIAQRHLVAIARALSVEARIVIMDEPTAALSRKEIDDLFRIVENLKRQGKAILFISHKFDEVYEIAENYAVFRDGKMVGAGTLATTPQDEIVRLMVGRDVTNAFPKQAVTLGPTVLSVRDYSHQTEFRDISLDLRKGEILGLYGLIGAGRSELCQSLFGITRPASGEVTLDGQPLTIRSPEDAIRAGIVYVPEERGRHGLALDMPIYQNMSLPSLTRTSRKGFLTAANEFALARKYAARLDLRAAALSVPVGTLSGGNQQKVVIGKWLATKPKVIILDEPTKGIDIGSKAAVHGFISELAAEGLSIIMISSELPEILGMSDRAIVMREGLMAGQFERAEFSPEKLVRAATGNA.

ABC transporter domains lie at 20 to 256 (LEMR…VGRD) and 266 to 510 (VTLG…TGNA). Position 52-59 (52-59 (GENGAGKS)) interacts with ATP.

It belongs to the ABC transporter superfamily. Ribose importer (TC 3.A.1.2.1) family. The complex is composed of an ATP-binding protein (RbsA), two transmembrane proteins (RbsC) and a solute-binding protein (RbsB).

The protein localises to the cell inner membrane. The enzyme catalyses D-ribose(out) + ATP + H2O = D-ribose(in) + ADP + phosphate + H(+). In terms of biological role, part of the ABC transporter complex RbsABC involved in ribose import. Responsible for energy coupling to the transport system. The sequence is that of Ribose import ATP-binding protein RbsA 1 from Agrobacterium fabrum (strain C58 / ATCC 33970) (Agrobacterium tumefaciens (strain C58)).